We begin with the raw amino-acid sequence, 341 residues long: Probable 2' cyclic ADP-D-ribose synthase TcpO (341 aa).

One can recognise a TIR domain in the interval 204–336 (KEYDIFVSHS…EIIHEILERI (133 aa)). NAD(+) is bound by residues 213 to 214 (SS) and Lys243. Glu279 is a catalytic residue.

The catalysed reaction is NAD(+) + H2O = ADP-D-ribose + nicotinamide + H(+). The enzyme catalyses NAD(+) = 2'cADPR + nicotinamide + H(+). In terms of biological role, NAD(+) hydrolase (NADase) that catalyzes cleavage of NAD(+) into ADP-D-ribose (ADPR) and nicotinamide. In addition to ADPR, also generates a cyclization variant of cyclic ADPR (cADPR), termed v-cADPR (probably 2'cADPR). The chain is Probable 2' cyclic ADP-D-ribose synthase TcpO from Methanobrevibacter olleyae.